Here is a 72-residue protein sequence, read N- to C-terminus: Conotoxin LvVIA (72 aa).

The N-terminal stretch at 1–17 is a signal peptide; sequence VLIIAVLFLTASELVTA. Residues 18–41 constitute a propeptide that is removed on maturation; that stretch reads DYTRDKWQYRAASLRDAMRNFRDT. Disulfide bonds link Cys-44–Cys-58, Cys-51–Cys-63, and Cys-57–Cys-70.

The protein belongs to the conotoxin O1 superfamily. Expressed by the venom duct.

The protein resides in the secreted. The chain is Conotoxin LvVIA from Conus lividus (Livid cone).